The following is a 555-amino-acid chain: MRTAMSCGGGLVQRLDFSSSDEEDGLSNGINEGPQKGSPVSSWRTNNCPFPITPQRNERELSPTQELSPSSDYSPDPSVGAECPGTPLHYSTWKKLKLCDTPYTPKSLLYKTLPSPGSRVHCRGQRLLRFVAGTGAELDDPSLVNINPFTPESYRQTHFQPNGKRKERPEDDCRTDRQMKYAEKEHPAVFQSKRFVLRETNMGSRYKTEFLEIEKIGAGEFGSVFKCIKRLDGCFYAIKRSKKPLAGSTDEQLALREVYAHAVLGHHPHVVRYYSAWAEDDHMIIQNEYCNGGSLQDLIVDNNKEGQFVLEQELKEILLQVSMGLKYIHGSGLVHMDIKPSNIFICRKQTELGQEESDGEDDLSSGSVLYKIGDLGHVTSILNPQVEEGDSRFLANEILQEDYSQLPKADIFALGLTIALAAGAAPLPCNEDSWHHIRKGNLPHVPQLLTPIFLALLKLLVHPDPVMRPPAASLAKNSVLRRCVGKAAQLQKQLNVEKFKTAMLERELKAAKLAQTSGKDECSDLPPMSGFSCRGRKRLVGAKNTRSLSFTCGGY.

2 disordered regions span residues 1–81 and 149–175; these read MRTA…SVGA and FTPE…DCRT. Residues 38 to 48 show a composition bias toward polar residues; the sequence is SPVSSWRTNNC. A compositionally biased stretch (low complexity) spans 68-78; that stretch reads SPSSDYSPDPS. Residues 149–160 are compositionally biased toward polar residues; that stretch reads FTPESYRQTHFQ. One can recognise a Protein kinase domain in the interval 210 to 480; that stretch reads FLEIEKIGAG…AASLAKNSVL (271 aa). ATP-binding positions include 216–224 and Lys-239; that span reads IGAGEFGSV. Asp-337 serves as the catalytic Proton acceptor. Residues Asn-342 and Asp-374 each coordinate Mg(2+). Residues 487–513 are a coiled coil; sequence AAQLQKQLNVEKFKTAMLERELKAAKL. Ser-549 is subject to Phosphoserine.

This sequence belongs to the protein kinase superfamily. Ser/Thr protein kinase family. WEE1 subfamily. Interacts with prmt5; this promotes protesomal degradation of wee2-a in the nucleus. The interaction with prmt5 is disrupted upon activation of the DNA replication checkpoint. In terms of processing, subject to proteasomal degradation in the nucleus. In terms of tissue distribution, detected in egg (at protein level). Oocyte-specific maternally supplied protein. Present in immature and mature oocytes and in early (pregastrula) embryos, but not in post-gastrula embryos.

It localises to the nucleus. It is found in the cytoplasm. The protein localises to the cytosol. The catalysed reaction is L-tyrosyl-[protein] + ATP = O-phospho-L-tyrosyl-[protein] + ADP + H(+). In terms of biological role, oocyte-specific protein tyrosine kinase that phosphorylates and inhibits cdk1 and acts as a key regulator of meiosis. Required to maintain meiotic arrest in oocytes by phosphorylating cdk1 at 'Tyr-15', which inhibits cdk1 activity and prevents meiotic reentry. Negative regulator of mitosis. Involved in the mitotic DNA replication checkpoint. This chain is Wee1-like protein kinase 2-A (wee2-a), found in Xenopus laevis (African clawed frog).